The primary structure comprises 337 residues: Ketol-acid reductoisomerase (NADP(+)) (337 aa).

In terms of domain architecture, KARI N-terminal Rossmann spans 3-183; it reads LEMFYDDDAD…GGTRAGVIKT (181 aa). NADP(+) contacts are provided by residues 26-29, Lys49, Ser52, Ser54, and 84-87; these read YGSQ and DTAQ. Residue His109 is part of the active site. Gly135 serves as a coordination point for NADP(+). The KARI C-terminal knotted domain maps to 184–329; sequence TFKDETETDL…KKLRDLMSWV (146 aa). Asp192, Glu196, Glu228, and Glu232 together coordinate Mg(2+). A substrate-binding site is contributed by Ser253.

The protein belongs to the ketol-acid reductoisomerase family. Mg(2+) is required as a cofactor.

It carries out the reaction (2R)-2,3-dihydroxy-3-methylbutanoate + NADP(+) = (2S)-2-acetolactate + NADPH + H(+). The catalysed reaction is (2R,3R)-2,3-dihydroxy-3-methylpentanoate + NADP(+) = (S)-2-ethyl-2-hydroxy-3-oxobutanoate + NADPH + H(+). The protein operates within amino-acid biosynthesis; L-isoleucine biosynthesis; L-isoleucine from 2-oxobutanoate: step 2/4. It functions in the pathway amino-acid biosynthesis; L-valine biosynthesis; L-valine from pyruvate: step 2/4. In terms of biological role, involved in the biosynthesis of branched-chain amino acids (BCAA). Catalyzes an alkyl-migration followed by a ketol-acid reduction of (S)-2-acetolactate (S2AL) to yield (R)-2,3-dihydroxy-isovalerate. In the isomerase reaction, S2AL is rearranged via a Mg-dependent methyl migration to produce 3-hydroxy-3-methyl-2-ketobutyrate (HMKB). In the reductase reaction, this 2-ketoacid undergoes a metal-dependent reduction by NADPH to yield (R)-2,3-dihydroxy-isovalerate. This is Ketol-acid reductoisomerase (NADP(+)) from Mycobacterium bovis (strain BCG / Pasteur 1173P2).